The primary structure comprises 382 residues: Anhydro-N-acetylmuramic acid kinase (382 aa).

G9–D16 lines the ATP pocket.

Belongs to the anhydro-N-acetylmuramic acid kinase family.

The catalysed reaction is 1,6-anhydro-N-acetyl-beta-muramate + ATP + H2O = N-acetyl-D-muramate 6-phosphate + ADP + H(+). The protein operates within amino-sugar metabolism; 1,6-anhydro-N-acetylmuramate degradation. It participates in cell wall biogenesis; peptidoglycan recycling. In terms of biological role, catalyzes the specific phosphorylation of 1,6-anhydro-N-acetylmuramic acid (anhMurNAc) with the simultaneous cleavage of the 1,6-anhydro ring, generating MurNAc-6-P. Is required for the utilization of anhMurNAc either imported from the medium or derived from its own cell wall murein, and thus plays a role in cell wall recycling. The chain is Anhydro-N-acetylmuramic acid kinase from Bacillus anthracis (strain A0248).